A 447-amino-acid polypeptide reads, in one-letter code: Putative branched-chain amino acid carrier protein SE_1090 (447 aa).

The next 12 membrane-spanning stretches (helical) occupy residues threonine 5–proline 25, isoleucine 40–leucine 60, proline 74–isoleucine 94, glycine 114–leucine 134, isoleucine 143–phenylalanine 163, glycine 193–isoleucine 213, isoleucine 229–isoleucine 249, leucine 290–valine 310, isoleucine 317–leucine 337, valine 350–alanine 370, isoleucine 382–isoleucine 402, and leucine 417–valine 437.

Belongs to the branched chain amino acid transporter family.

Its subcellular location is the cell membrane. Component of the transport system for branched-chain amino acids (leucine, isoleucine and valine), which is coupled to a proton motive force. This Staphylococcus epidermidis (strain ATCC 12228 / FDA PCI 1200) protein is Putative branched-chain amino acid carrier protein SE_1090.